A 61-amino-acid polypeptide reads, in one-letter code: Large ribosomal subunit protein bL28 (61 aa).

Belongs to the bacterial ribosomal protein bL28 family.

The sequence is that of Large ribosomal subunit protein bL28 from Lachnospira eligens (strain ATCC 27750 / DSM 3376 / VPI C15-48 / C15-B4) (Eubacterium eligens).